The following is a 178-amino-acid chain: Nicotinamide-nucleotide adenylyltransferase (178 aa).

The protein belongs to the archaeal NMN adenylyltransferase family.

It localises to the cytoplasm. It catalyses the reaction beta-nicotinamide D-ribonucleotide + ATP + H(+) = diphosphate + NAD(+). Its pathway is cofactor biosynthesis; NAD(+) biosynthesis; NAD(+) from nicotinamide D-ribonucleotide: step 1/1. The sequence is that of Nicotinamide-nucleotide adenylyltransferase from Caldivirga maquilingensis (strain ATCC 700844 / DSM 13496 / JCM 10307 / IC-167).